The following is a 265-amino-acid chain: Triosephosphate isomerase (265 aa).

8 to 10 (NWK) is a binding site for substrate. The Electrophile role is filled by His103. Glu182 (proton acceptor) is an active-site residue. Substrate contacts are provided by residues Gly188, Ser226, and 247–248 (GG).

It belongs to the triosephosphate isomerase family. As to quaternary structure, homodimer.

It localises to the cytoplasm. The catalysed reaction is D-glyceraldehyde 3-phosphate = dihydroxyacetone phosphate. It functions in the pathway carbohydrate biosynthesis; gluconeogenesis. Its pathway is carbohydrate degradation; glycolysis; D-glyceraldehyde 3-phosphate from glycerone phosphate: step 1/1. In terms of biological role, involved in the gluconeogenesis. Catalyzes stereospecifically the conversion of dihydroxyacetone phosphate (DHAP) to D-glyceraldehyde-3-phosphate (G3P). This chain is Triosephosphate isomerase, found in Psychrobacter sp. (strain PRwf-1).